The following is a 732-amino-acid chain: Elongation factor 2 (732 aa).

In terms of domain architecture, tr-type G spans 19-260 (ERIRNMGIAA…MVVKHLPNPL (242 aa)). Residues 28 to 35 (AHIDHGKT), 94 to 98 (DTPGH), and 148 to 151 (NKVD) each bind GTP. His-597 is subject to Diphthamide.

It belongs to the TRAFAC class translation factor GTPase superfamily. Classic translation factor GTPase family. EF-G/EF-2 subfamily.

It localises to the cytoplasm. In terms of biological role, catalyzes the GTP-dependent ribosomal translocation step during translation elongation. During this step, the ribosome changes from the pre-translocational (PRE) to the post-translocational (POST) state as the newly formed A-site-bound peptidyl-tRNA and P-site-bound deacylated tRNA move to the P and E sites, respectively. Catalyzes the coordinated movement of the two tRNA molecules, the mRNA and conformational changes in the ribosome. The sequence is that of Elongation factor 2 from Thermococcus kodakarensis (strain ATCC BAA-918 / JCM 12380 / KOD1) (Pyrococcus kodakaraensis (strain KOD1)).